The primary structure comprises 553 residues: CDP-diacylglycerol--glycerol-3-phosphate 3-phosphatidyltransferase, mitochondrial (553 aa).

The transit peptide at 1–25 (MAAPAAGPVFWRRLLGLLPGRPGLA) directs the protein to the mitochondrion. Serine 46 is subject to Phosphoserine. Residue 121-128 (ASLYLGTG) participates in ATP binding. PLD phosphodiesterase domains lie at 212–238 (TIGL…SDSY) and 457–490 (TGWT…GYRS). Active-site residues include histidine 217, lysine 219, and aspartate 224.

This sequence belongs to the CDP-alcohol phosphatidyltransferase class-II family.

The protein localises to the mitochondrion. The catalysed reaction is a CDP-1,2-diacyl-sn-glycerol + sn-glycerol 3-phosphate = a 1,2-diacyl-sn-glycero-3-phospho-(1'-sn-glycero-3'-phosphate) + CMP + H(+). It functions in the pathway phospholipid metabolism; phosphatidylglycerol biosynthesis; phosphatidylglycerol from CDP-diacylglycerol: step 1/2. Activated by calcium and magnesium and inhibited by other bivalent cations. In terms of biological role, functions in the biosynthesis of the anionic phospholipids phosphatidylglycerol and cardiolipin. This chain is CDP-diacylglycerol--glycerol-3-phosphate 3-phosphatidyltransferase, mitochondrial (PGS1), found in Cricetulus griseus (Chinese hamster).